Consider the following 305-residue polypeptide: Phosphatidylinositol:ceramide inositolphosphotransferase 2 (305 aa).

The next 6 membrane-spanning stretches (helical) occupy residues 34-54, 81-101, 105-125, 168-188, 198-218, and 221-241; these read LLAGLICQYIHGLAAKGVHYI, ETVFTSVFLSFFLWTFHPFIL, KIYTVLIWCRVLAFLVACQFL, VMYGCGDLIFSSHMIFTLVFV, RFIKLFGWLTAIVQSLLIIAS, and HYSVDVVVAWYTVNLVVFCLD. The active site involves histidine 180. Catalysis depends on residues histidine 221 and aspartate 225.

Belongs to the sphingomyelin synthase family. In terms of tissue distribution, expressed in leaves, roots, stems, flowers and siliques.

It is found in the golgi apparatus. The protein localises to the trans-Golgi network membrane. It catalyses the reaction an N-(2R-hydroxy-very-long-chain fatty acyl)-(R)-4-hydroxysphingoid base + a 1,2-diacyl-sn-glycero-3-phospho-(1D-myo-inositol) = a 1D-myo-inositol-1-phospho-N-[(R)-2-hydroxy-very-long-chain fatty acyl]-(R)-4-hydroxysphingoid base + a 1,2-diacyl-sn-glycerol. Its pathway is sphingolipid metabolism. Functionally, catalyzes the transfer of the phosphorylinositol group from phosphatidylinositol (PI) to phytoceramide, an essential step in sphingolipid biosynthesis. May play an important role in modulating plant programmed cell death (PCD) associated with defense (e.g. toward Golovinomyces cichoracearum) by promoting sphingolipid metabolism and thus regulating ceramide accumulation. The sequence is that of Phosphatidylinositol:ceramide inositolphosphotransferase 2 from Arabidopsis thaliana (Mouse-ear cress).